The following is a 101-amino-acid chain: Small ribosomal subunit protein uS14A (101 aa).

Disordered regions lie at residues 1-21 and 49-73; these read MAKKSKIAKNEQRKEVVAHHA and QRLPRDASPTRVRNRDAADGRPRGT. Basic and acidic residues-rich tracts occupy residues 8-21 and 61-70; these read AKNEQRKEVVAHHA and RNRDAADGRP.

It belongs to the universal ribosomal protein uS14 family. Part of the 30S ribosomal subunit. Contacts proteins S3 and S10.

In terms of biological role, binds 16S rRNA, required for the assembly of 30S particles and may also be responsible for determining the conformation of the 16S rRNA at the A site. The protein is Small ribosomal subunit protein uS14A of Kineococcus radiotolerans (strain ATCC BAA-149 / DSM 14245 / SRS30216).